The chain runs to 321 residues: Olfactory receptor 51G1 (321 aa).

Over 1–27 the chain is Extracellular; sequence MTILLNSSLQRATFFLTGFQGLEGLHG. N-linked (GlcNAc...) asparagine glycosylation is present at Asn6. A helical membrane pass occupies residues 28-48; it reads WISIPFCFIYLTVILGNLTIL. Over 49–56 the chain is Cytoplasmic; that stretch reads HVICTDAT. Residues 57–77 form a helical membrane-spanning segment; the sequence is LHGPMYYFLGMLAVTDLGLCL. Over 78-101 the chain is Extracellular; it reads STLPTVLGIFWFDTREIGIPACFT. A disulfide bridge links Cys99 with Cys191. Residues 102-122 form a helical membrane-spanning segment; that stretch reads QLFFIHTLSSMESSVLLSMSI. At 123 to 141 the chain is on the cytoplasmic side; that stretch reads DRYVAVCNPLHDSTVLTPA. The helical transmembrane segment at 142-162 threads the bilayer; it reads CIVKMGLSSVLRSALLILPLP. Residues 163–198 are Extracellular-facing; sequence FLLKRFQYCHSHVLAHAYCLHLEIMKLACSSIIVNH. Residues 199 to 219 traverse the membrane as a helical segment; that stretch reads IYGLFVVACTVGVDSLLIFLS. Residues 220–239 lie on the Cytoplasmic side of the membrane; that stretch reads YALILRTVLSIASHQERLRA. A helical membrane pass occupies residues 240-260; it reads LNTCVSHICAVLLFYIPMIGL. Topologically, residues 261 to 275 are extracellular; sequence SLVHRFGEHLPRVVH. Residues 276-296 traverse the membrane as a helical segment; sequence LFMSYVYLLVPPLMNPIIYSI. The Cytoplasmic portion of the chain corresponds to 297-321; the sequence is KTKQIRQRIIKKFQFIKSLRCFWKD.

This sequence belongs to the G-protein coupled receptor 1 family.

It localises to the cell membrane. Its function is as follows. Odorant receptor. The protein is Olfactory receptor 51G1 (OR51G1) of Homo sapiens (Human).